The primary structure comprises 406 residues: Argininosuccinate synthase (406 aa).

Residues 14–22 (AYSGGLDTS) and A41 contribute to the ATP site. L-citrulline is bound by residues Y92 and S97. ATP is bound at residue G122. The L-aspartate site is built by T124, N128, and D129. N128 serves as a coordination point for L-citrulline. R132, S181, S190, E266, and Y278 together coordinate L-citrulline.

This sequence belongs to the argininosuccinate synthase family. Type 1 subfamily. As to quaternary structure, homotetramer.

It is found in the cytoplasm. It carries out the reaction L-citrulline + L-aspartate + ATP = 2-(N(omega)-L-arginino)succinate + AMP + diphosphate + H(+). It participates in amino-acid biosynthesis; L-arginine biosynthesis; L-arginine from L-ornithine and carbamoyl phosphate: step 2/3. In Geobacter sulfurreducens (strain ATCC 51573 / DSM 12127 / PCA), this protein is Argininosuccinate synthase.